The sequence spans 125 residues: Glucose-1-phosphate adenylyltransferase small subunit (125 aa).

It belongs to the bacterial/plant glucose-1-phosphate adenylyltransferase family. In terms of assembly, heterotetramer. As to expression, leaves.

The protein localises to the plastid. The protein resides in the chloroplast. It localises to the amyloplast. It catalyses the reaction alpha-D-glucose 1-phosphate + ATP + H(+) = ADP-alpha-D-glucose + diphosphate. It functions in the pathway glycan biosynthesis; starch biosynthesis. Activated by 3'phosphoglycerate, inhibited by orthophosphate. Allosteric regulation. In terms of biological role, this protein plays a role in synthesis of starch. It catalyzes the synthesis of the activated glycosyl donor, ADP-glucose from Glc-1-P and ATP. The polypeptide is Glucose-1-phosphate adenylyltransferase small subunit (GLG1) (Zea mays (Maize)).